A 249-amino-acid chain; its full sequence is BPI fold-containing family A member 1 (249 aa).

The first 15 residues, 1–15, serve as a signal peptide directing secretion; sequence MFQVAGLIVFCGLLA. Positions 81–86 are important for surfactant activity and antibacterial properties; it reads LLGGLL. Residue asparagine 151 is glycosylated (N-linked (GlcNAc...) asparagine). Residues cysteine 173 and cysteine 217 are joined by a disulfide bond.

The protein belongs to the BPI/LBP/Plunc superfamily. Plunc family. In terms of assembly, monomer. Interacts (via N-terminus) with SCNN1B, a subunit of the heterotrimeric epithelial sodium channel (ENaC); this inhibits proteolytic activation of ENaC. In terms of tissue distribution, expressed in lung and trachea.

Its subcellular location is the secreted. In terms of biological role, lipid-binding protein which shows high specificity for the surfactant phospholipid dipalmitoylphosphatidylcholine (DPPC). Plays a role in the innate immune responses of the upper airways. Reduces the surface tension in secretions from airway epithelia and inhibits the formation of biofilm by pathogenic Gram-negative bacteria, such as P.aeruginosa and K.pneumoniae. Negatively regulates proteolytic cleavage of SCNN1G, an event that is required for activation of the epithelial sodium channel (ENaC), and thereby contributes to airway surface liquid homeostasis and proper clearance of mucus. Plays a role in the airway inflammatory response after exposure to irritants. May attract macrophages and neutrophils. This is BPI fold-containing family A member 1 (BPIFA1) from Sus scrofa (Pig).